A 136-amino-acid chain; its full sequence is Small ribosomal subunit protein uS19 (136 aa).

The tract at residues 117-136 (VQHGDPGMGATRSSMFVPLK) is disordered.

It belongs to the universal ribosomal protein uS19 family.

Protein S19 forms a complex with S13 that binds strongly to the 16S ribosomal RNA. The protein is Small ribosomal subunit protein uS19 of Methanobrevibacter smithii (strain ATCC 35061 / DSM 861 / OCM 144 / PS).